Reading from the N-terminus, the 250-residue chain is Proteasome subunit alpha type-4-1 (250 aa).

This sequence belongs to the peptidase T1A family. As to quaternary structure, the 26S proteasome consists of a 20S proteasome core and two 19S regulatory subunits. The 20S proteasome core is composed of 28 subunits that are arranged in four stacked rings, resulting in a barrel-shaped structure. The two end rings are each formed by seven alpha subunits, and the two central rings are each formed by seven beta subunits. The catalytic chamber with the active sites is on the inside of the barrel.

Its subcellular location is the cytoplasm. It localises to the nucleus. The proteasome is a multicatalytic proteinase complex which is characterized by its ability to cleave peptides with Arg, Phe, Tyr, Leu, and Glu adjacent to the leaving group at neutral or slightly basic pH. The proteasome has an ATP-dependent proteolytic activity. The polypeptide is Proteasome subunit alpha type-4-1 (Oryza sativa subsp. indica (Rice)).